Here is a 481-residue protein sequence, read N- to C-terminus: Uridine 5'-monophosphate synthase (481 aa).

Residues 1 to 214 (MEVASQALGP…VFSAANHNGL (214 aa)) are OPRTase. Y37 is subject to Phosphotyrosine. The interval 215 to 220 (PPPEKK) is domain linker. The tract at residues 221–481 (ACKELSFGAR…EAYLSRLAVQ (261 aa)) is OMPdecase. Position 257 (S257) interacts with orotidine 5'-phosphate. UMP contacts are provided by residues S257, D259, and 281–283 (KTH). Orotidine 5'-phosphate is bound by residues K281, K314, D317, T321, S372, 430–432 (QQY), and 450–451 (GR). Catalysis depends on for OMPdecase activity residues K314 and D317. Residues D317, T321, S372, 430–432 (QQY), and 450–451 (GR) each bind UMP.

This sequence in the N-terminal section; belongs to the purine/pyrimidine phosphoribosyltransferase family. It in the C-terminal section; belongs to the OMP decarboxylase family. In terms of assembly, homodimer; dimerization is required for enzymatic activity.

The catalysed reaction is orotidine 5'-phosphate + diphosphate = orotate + 5-phospho-alpha-D-ribose 1-diphosphate. It carries out the reaction orotidine 5'-phosphate + H(+) = UMP + CO2. It participates in pyrimidine metabolism; UMP biosynthesis via de novo pathway; UMP from orotate: step 1/2. Its pathway is pyrimidine metabolism; UMP biosynthesis via de novo pathway; UMP from orotate: step 2/2. In terms of biological role, bifunctional enzyme catalyzing the last two steps of de novo pyrimidine biosynthesis, orotate phosphoribosyltransferase (OPRT), which converts orotate to orotidine-5'-monophosphate (OMP), and orotidine-5'-monophosphate decarboxylase (ODC), the terminal enzymatic reaction that decarboxylates OMP to uridine monophosphate (UMP). In Mus musculus (Mouse), this protein is Uridine 5'-monophosphate synthase (Umps).